We begin with the raw amino-acid sequence, 542 residues long: Phosphoenolpyruvate carboxykinase (ATP) (542 aa).

Arginine 67, tyrosine 208, and lysine 214 together coordinate substrate. ATP contacts are provided by residues lysine 214, histidine 233, and 249-257 (GLSGTGKTT). 2 residues coordinate Mn(2+): lysine 214 and histidine 233. A Mn(2+)-binding site is contributed by aspartate 270. ATP-binding positions include glutamate 298, arginine 334, 450–451 (RI), and threonine 456. Arginine 334 contacts substrate.

The protein belongs to the phosphoenolpyruvate carboxykinase (ATP) family. In terms of assembly, monomer. It depends on Mn(2+) as a cofactor.

The protein localises to the cytoplasm. The catalysed reaction is oxaloacetate + ATP = phosphoenolpyruvate + ADP + CO2. It participates in carbohydrate biosynthesis; gluconeogenesis. Functionally, involved in the gluconeogenesis. Catalyzes the conversion of oxaloacetate (OAA) to phosphoenolpyruvate (PEP) through direct phosphoryl transfer between the nucleoside triphosphate and OAA. The protein is Phosphoenolpyruvate carboxykinase (ATP) of Vibrio cholerae serotype O1 (strain ATCC 39541 / Classical Ogawa 395 / O395).